We begin with the raw amino-acid sequence, 65 residues long: UPF0370 protein Ent638_2968 (65 aa).

A helical membrane pass occupies residues leucine 4–isoleucine 24. Positions lysine 39 to lysine 65 are disordered. Residues leucine 42–lysine 65 are compositionally biased toward basic and acidic residues.

It belongs to the UPF0370 family.

The protein resides in the cell membrane. The protein is UPF0370 protein Ent638_2968 of Enterobacter sp. (strain 638).